Consider the following 78-residue polypeptide: Exodeoxyribonuclease 7 small subunit (78 aa).

Belongs to the XseB family. As to quaternary structure, heterooligomer composed of large and small subunits.

Its subcellular location is the cytoplasm. It catalyses the reaction Exonucleolytic cleavage in either 5'- to 3'- or 3'- to 5'-direction to yield nucleoside 5'-phosphates.. Functionally, bidirectionally degrades single-stranded DNA into large acid-insoluble oligonucleotides, which are then degraded further into small acid-soluble oligonucleotides. The polypeptide is Exodeoxyribonuclease 7 small subunit (Mycobacterium leprae (strain TN)).